A 169-amino-acid chain; its full sequence is MTALNVLIYPDDHLKVVCEPVTEVNDAIRKIVDDMFDTMYQEKGIGLAAPQVDILQRIITIDVEGDKQNQFVLINPEILASEGETGIEEGCLSIPGFRALVPRKEKVTVRALDRDGKEFTLDADGLLAICIQHEIDHLNGILFVDYLSPLKRQRIKEKLIKYKKQIAKS.

Cys91 and His133 together coordinate Fe cation. Residue Glu134 is part of the active site. His137 is a Fe cation binding site.

Belongs to the polypeptide deformylase family. Fe(2+) is required as a cofactor.

It catalyses the reaction N-terminal N-formyl-L-methionyl-[peptide] + H2O = N-terminal L-methionyl-[peptide] + formate. Its function is as follows. Removes the formyl group from the N-terminal Met of newly synthesized proteins. Requires at least a dipeptide for an efficient rate of reaction. N-terminal L-methionine is a prerequisite for activity but the enzyme has broad specificity at other positions. The protein is Peptide deformylase of Haemophilus influenzae (strain 86-028NP).